The primary structure comprises 391 residues: 23S rRNA (uracil(747)-C(5))-methyltransferase RlmC (391 aa).

4 residues coordinate [4Fe-4S] cluster: cysteine 5, cysteine 13, cysteine 16, and cysteine 95. Glutamine 220, phenylalanine 249, glutamate 276, and asparagine 322 together coordinate S-adenosyl-L-methionine. The active-site Nucleophile is cysteine 349.

Belongs to the class I-like SAM-binding methyltransferase superfamily. RNA M5U methyltransferase family. RlmC subfamily.

It carries out the reaction uridine(747) in 23S rRNA + S-adenosyl-L-methionine = 5-methyluridine(747) in 23S rRNA + S-adenosyl-L-homocysteine + H(+). In terms of biological role, catalyzes the formation of 5-methyl-uridine at position 747 (m5U747) in 23S rRNA. The chain is 23S rRNA (uracil(747)-C(5))-methyltransferase RlmC from Actinobacillus pleuropneumoniae serotype 3 (strain JL03).